The primary structure comprises 263 residues: Triosephosphate isomerase (263 aa).

10–12 (NWK) provides a ligand contact to substrate. Histidine 104 acts as the Electrophile in catalysis. Glutamate 176 functions as the Proton acceptor in the catalytic mechanism. Substrate is bound by residues glycine 182, serine 221, and 242–243 (GG).

This sequence belongs to the triosephosphate isomerase family. In terms of assembly, homodimer.

The protein localises to the cytoplasm. The catalysed reaction is D-glyceraldehyde 3-phosphate = dihydroxyacetone phosphate. Its pathway is carbohydrate biosynthesis; gluconeogenesis. The protein operates within carbohydrate degradation; glycolysis; D-glyceraldehyde 3-phosphate from glycerone phosphate: step 1/1. Its function is as follows. Involved in the gluconeogenesis. Catalyzes stereospecifically the conversion of dihydroxyacetone phosphate (DHAP) to D-glyceraldehyde-3-phosphate (G3P). The chain is Triosephosphate isomerase from Haemophilus influenzae (strain PittEE).